A 329-amino-acid chain; its full sequence is MEPWPLTFLLLLLLLLWLQGCVSGHSNENLYRKVWRREGETLSVQCSYKNRRNLVEAKSWCKVKKKKCDHNFTRSWVRGPSYSLRDDAKVKVVRITMEALRVQDSGRYWCMRNTAGHFYPLVGFQLEVYPALTTERNVPHTHLTNTPMDGFVTTGQVHISDPHAPFTSDVTMFTSEVTMFTSGLLTLASGTTTPTPVTGYSFIDTSGTVTEPERNTESQPATLSPSNARSFSADPVTTSTMSRHQSSSLSTTGTCHPLTPNRSQETYIPAMVVVLTFLPAPVVLVVAYGFWKKRHMGRYNLGSNYAKPWIHLPEGPETPWKPAWSKITQ.

The first 24 residues, 1-24 (MEPWPLTFLLLLLLLLWLQGCVSG), serve as a signal peptide directing secretion. Residues 25 to 126 (HSNENLYRKV…HFYPLVGFQL (102 aa)) form the Ig-like V-type domain. Over 25 to 270 (HSNENLYRKV…NRSQETYIPA (246 aa)) the chain is Extracellular. 2 cysteine pairs are disulfide-bonded: Cys-46–Cys-110 and Cys-61–Cys-68. The interval 202-259 (FIDTSGTVTEPERNTESQPATLSPSNARSFSADPVTTSTMSRHQSSSLSTTGTCHPLT) is disordered. Over residues 217–259 (ESQPATLSPSNARSFSADPVTTSTMSRHQSSSLSTTGTCHPLT) the composition is skewed to polar residues. A glycan (N-linked (GlcNAc...) asparagine) is linked at Asn-261. Residues 271 to 291 (MVVVLTFLPAPVVLVVAYGFW) traverse the membrane as a helical segment. Over 292-329 (KKRHMGRYNLGSNYAKPWIHLPEGPETPWKPAWSKITQ) the chain is Cytoplasmic.

Interacts with CD276 and this interaction enhances T-cell activation. Detected in B-lymphocytes and macrophages. Detected in spleen, lymph nodes, blood, bone marrow and cells from the peritoneal cavity (at protein level).

It is found in the cell membrane. In terms of biological role, cell surface receptor that may play a role in the innate and adaptive immune response. Acts as a counter-receptor for CD276 and interaction with CD276 on T-cells enhances T-cell activation. This is Trem-like transcript 2 protein (Treml2) from Mus musculus (Mouse).